We begin with the raw amino-acid sequence, 421 residues long: Peroxisomal succinyl-coenzyme A thioesterase (421 aa).

The active-site Charge relay system is the serine 232. N6-succinyllysine is present on lysine 313. Active-site charge relay system residues include aspartate 326 and histidine 360. The Microbody targeting signal motif lies at 419-421 (CRL).

Belongs to the C/M/P thioester hydrolase family. Mainly expressed in liver and kidney. Weakly expressed in other tissues including intestine, adrenal gland and adipose tissues.

It localises to the peroxisome. It catalyses the reaction succinyl-CoA + H2O = succinate + CoA + H(+). The enzyme catalyses glutaryl-CoA + H2O = glutarate + CoA + H(+). It participates in lipid metabolism; fatty acid metabolism. Catalyzes the hydrolysis of acyl-CoAs into free fatty acids and coenzyme A (CoASH), regulating their respective intracellular levels. In contrast to its human ortholog, functions essentially as a succinyl-CoA thioesterase with no activity with medium to long chain saturated acyl-CoAs and with a low activity toward glutaryl-CoA. The chain is Peroxisomal succinyl-coenzyme A thioesterase (Acot4) from Mus musculus (Mouse).